The primary structure comprises 381 residues: Creatine kinase B-type (381 aa).

Position 4 is a phosphoserine (Ser4). In terms of domain architecture, Phosphagen kinase N-terminal spans 11–98 (KLRFPAEDEF…FDPIIEDRHG (88 aa)). Thr35 carries the phosphothreonine modification. Lys45 is covalently cross-linked (Glycyl lysine isopeptide (Lys-Gly) (interchain with G-Cter in ubiquitin)). Val72 contributes to the creatine binding site. Residues 96-110 (RHGGYKPSDEHKTDL) are compositionally biased toward basic and acidic residues. The interval 96–123 (RHGGYKPSDEHKTDLNPDNLQGGDDLDP) is disordered. Residues Lys101 and Lys107 each participate in a glycyl lysine isopeptide (Lys-Gly) (interchain with G-Cter in ubiquitin) cross-link. At Tyr125 the chain carries Phosphotyrosine. The Phosphagen kinase C-terminal domain occupies 125 to 367 (YVLSSRVRTG…KLLIEMEQRL (243 aa)). ATP-binding positions include 128-132 (SSRVR), Arg130, Arg132, and His191. The segment at 130-138 (RVRTGRSIR) is internal MTS-like signal. Ser199 carries the post-translational modification Phosphoserine. Glu232 contributes to the creatine binding site. Arg236 provides a ligand contact to ATP. Tyr269 carries the post-translational modification 3'-nitrotyrosine. Ser285 is a binding site for creatine. Residues Arg292, Arg320, 320–325 (RGTGGV), and Asp335 each bind ATP. At Thr322 the chain carries Phosphothreonine. Lys381 participates in a covalent cross-link: Glycyl lysine isopeptide (Lys-Gly) (interchain with G-Cter in ubiquitin).

The protein belongs to the ATP:guanido phosphotransferase family. As to quaternary structure, dimer of identical or non-identical chains, which can be either B (brain type) or M (muscle type). With MM being the major form in skeletal muscle and myocardium, MB existing in myocardium, and BB existing in many tissues, especially brain. Interacts with SLC12A6 (via C-terminus); the interaction may be required for SLC12A6 potassium-chloride cotransport activity. Ubiquitinated by the ECS(ASB9) complex, leading to its degradation by the proteasome.

The protein localises to the cytoplasm. It localises to the cytosol. Its subcellular location is the mitochondrion. The protein resides in the cell membrane. The catalysed reaction is creatine + ATP = N-phosphocreatine + ADP + H(+). Reversibly catalyzes the transfer of phosphate between ATP and various phosphogens (e.g. creatine phosphate). Creatine kinase isoenzymes play a central role in energy transduction in tissues with large, fluctuating energy demands, such as skeletal muscle, heart, brain and spermatozoa. Acts as a key regulator of adaptive thermogenesis as part of the futile creatine cycle: localizes to the mitochondria of thermogenic fat cells and acts by mediating phosphorylation of creatine to initiate a futile cycle of creatine phosphorylation and dephosphorylation. During the futile creatine cycle, creatine and N-phosphocreatine are in a futile cycle, which dissipates the high energy charge of N-phosphocreatine as heat without performing any mechanical or chemical work. The protein is Creatine kinase B-type (CKB) of Canis lupus familiaris (Dog).